A 289-amino-acid polypeptide reads, in one-letter code: MDDKSMARGRKAFVTGFPIKHSRSPLIHGFWLKELGIDGSYEAVEVKPEDFSSFAASLAANGFAGGNVTIPHKEAAYAAAESLDEAACAIGAVNTLWLENGRLCGGNTDAYGFAANLDASAPGWDKADRALVLGAGGASRAVVHALLSRGVCHVSVVNRTLSRAEELAAHFGARVYAHGWDEAQALVSNAGLIVNTTALGMSGHGEGQDFPIDLTCAPKEAVATDIVYVPLRTAFLNKAEKAGLKTVDGLGMLLHQAVPGFERWFGQRPQVTQALREHILADMAKAGAL.

Shikimate contacts are provided by residues 22 to 24 (SRS) and Thr-69. The active-site Proton acceptor is the Lys-73. Glu-85 contacts NADP(+). Asn-94 and Asp-109 together coordinate shikimate. Residues 134-138 (GAGGA), 158-163 (NRTLSR), and Ile-226 each bind NADP(+). Position 228 (Tyr-228) interacts with shikimate. NADP(+) is bound at residue Gly-249.

The protein belongs to the shikimate dehydrogenase family. Homodimer.

It catalyses the reaction shikimate + NADP(+) = 3-dehydroshikimate + NADPH + H(+). It functions in the pathway metabolic intermediate biosynthesis; chorismate biosynthesis; chorismate from D-erythrose 4-phosphate and phosphoenolpyruvate: step 4/7. Functionally, involved in the biosynthesis of the chorismate, which leads to the biosynthesis of aromatic amino acids. Catalyzes the reversible NADPH linked reduction of 3-dehydroshikimate (DHSA) to yield shikimate (SA). The chain is Shikimate dehydrogenase (NADP(+)) from Brucella canis (strain ATCC 23365 / NCTC 10854 / RM-666).